We begin with the raw amino-acid sequence, 436 residues long: Glutamyl-tRNA reductase 2 (436 aa).

Residues 49–52 (TCNR), Ser106, 111–113 (EPQ), and Gln117 contribute to the substrate site. The Nucleophile role is filled by Cys50. 186–191 (GAGKMC) contacts NADP(+).

The protein belongs to the glutamyl-tRNA reductase family. Homodimer.

It catalyses the reaction (S)-4-amino-5-oxopentanoate + tRNA(Glu) + NADP(+) = L-glutamyl-tRNA(Glu) + NADPH + H(+). It participates in porphyrin-containing compound metabolism; protoporphyrin-IX biosynthesis; 5-aminolevulinate from L-glutamyl-tRNA(Glu): step 1/2. Functionally, catalyzes the NADPH-dependent reduction of glutamyl-tRNA(Glu) to glutamate 1-semialdehyde (GSA). In Koribacter versatilis (strain Ellin345), this protein is Glutamyl-tRNA reductase 2.